A 298-amino-acid chain; its full sequence is Capsid vertex protein (298 aa).

Belongs to the Tevenvirinae capsid vertex family. Homopentamer. Interacts with the portal protein. Interacts with the major capsid protein that forms hexamers.

The protein localises to the virion. Capsid protein that self-associates to form pentons, building the capsid in association with hexamers of the major capsid protein and one dodecamer of the portal protein. The protein is Capsid vertex protein of Vibrio parahaemolyticus (KVP40).